The primary structure comprises 25 residues: U1-poneritoxin-Ng1b (25 aa).

Expressed by the venom gland.

It is found in the secreted. It localises to the target cell membrane. Its function is as follows. Has a broad spectrum of activity against both Gram-positive and Gram-negative bacteria and S.cerevisiae. Has insecticidal and hemolytic activities. May act by disrupting the integrity of the bacterial cell membrane. The chain is U1-poneritoxin-Ng1b from Neoponera goeldii (Ponerine ant).